A 442-amino-acid chain; its full sequence is Ribosomal protein uS12 methylthiotransferase RimO (442 aa).

The 111-residue stretch at 9 to 119 (PRIGFVSLGC…VLSHVHQYVP (111 aa)) folds into the MTTase N-terminal domain. 6 residues coordinate [4Fe-4S] cluster: C18, C54, C83, C151, C155, and C158. A Radical SAM core domain is found at 137-375 (LTPRHYAYLK…QLQQAISTQR (239 aa)). Positions 377 to 442 (QDKIGREVLV…DEYDLWGSRV (66 aa)) constitute a TRAM domain.

Belongs to the methylthiotransferase family. RimO subfamily. [4Fe-4S] cluster serves as cofactor.

The protein localises to the cytoplasm. The catalysed reaction is L-aspartate(89)-[ribosomal protein uS12]-hydrogen + (sulfur carrier)-SH + AH2 + 2 S-adenosyl-L-methionine = 3-methylsulfanyl-L-aspartate(89)-[ribosomal protein uS12]-hydrogen + (sulfur carrier)-H + 5'-deoxyadenosine + L-methionine + A + S-adenosyl-L-homocysteine + 2 H(+). In terms of biological role, catalyzes the methylthiolation of an aspartic acid residue of ribosomal protein uS12. This Pectobacterium atrosepticum (strain SCRI 1043 / ATCC BAA-672) (Erwinia carotovora subsp. atroseptica) protein is Ribosomal protein uS12 methylthiotransferase RimO.